The primary structure comprises 157 residues: MFKVGIGYDVHRFVEGRKLILGGVEIPFEKGLLGHSDADVLVHAIIDAILGAMGENDIGRLFPDSSPNYKDISSLVLLKEVAKLLEEKNMKIVNIDSTVVSQRPKISPYTNEMKNKIADCLKIESTQVNIKGKTTEGLGFEGREEGISAYAVVLICE.

A divalent metal cation contacts are provided by D9 and H11. Residues D9–H11 and H35–S36 each bind 4-CDP-2-C-methyl-D-erythritol 2-phosphate. Residue H43 participates in a divalent metal cation binding. Residues D57 to G59, F140, and R143 each bind 4-CDP-2-C-methyl-D-erythritol 2-phosphate.

The protein belongs to the IspF family. In terms of assembly, homotrimer. A divalent metal cation serves as cofactor.

It carries out the reaction 4-CDP-2-C-methyl-D-erythritol 2-phosphate = 2-C-methyl-D-erythritol 2,4-cyclic diphosphate + CMP. It participates in isoprenoid biosynthesis; isopentenyl diphosphate biosynthesis via DXP pathway; isopentenyl diphosphate from 1-deoxy-D-xylulose 5-phosphate: step 4/6. Involved in the biosynthesis of isopentenyl diphosphate (IPP) and dimethylallyl diphosphate (DMAPP), two major building blocks of isoprenoid compounds. Catalyzes the conversion of 4-diphosphocytidyl-2-C-methyl-D-erythritol 2-phosphate (CDP-ME2P) to 2-C-methyl-D-erythritol 2,4-cyclodiphosphate (ME-CPP) with a corresponding release of cytidine 5-monophosphate (CMP). This Caldicellulosiruptor bescii (strain ATCC BAA-1888 / DSM 6725 / KCTC 15123 / Z-1320) (Anaerocellum thermophilum) protein is 2-C-methyl-D-erythritol 2,4-cyclodiphosphate synthase.